Consider the following 108-residue polypeptide: Peptidyl-prolyl cis-trans isomerase FKBP1B (108 aa).

The region spanning 20-108 is the PPIase FKBP-type domain; it reads GQICVVHYTG…IFDVELLNLE (89 aa).

It belongs to the FKBP-type PPIase family. FKBP1 subfamily. Identified in a complex composed of RYR2, FKBP1B, PKA catalytic subunit, PRKAR2A, AKAP6, and the protein phosphatases PP2A and PP1. Interacts directly with RYR2. In terms of tissue distribution, detected in heart muscle (at protein level). Ubiquitous.

It is found in the cytoplasm. The protein resides in the sarcoplasmic reticulum. The catalysed reaction is [protein]-peptidylproline (omega=180) = [protein]-peptidylproline (omega=0). Inhibited by both FK506 and rapamycin. Functionally, has the potential to contribute to the immunosuppressive and toxic effects of FK506 and rapamycin. PPIases accelerate the folding of proteins. It catalyzes the cis-trans isomerization of proline imidic peptide bonds in oligopeptides. The sequence is that of Peptidyl-prolyl cis-trans isomerase FKBP1B (Fkbp1b) from Rattus norvegicus (Rat).